Here is a 503-residue protein sequence, read N- to C-terminus: Cytosolic carboxypeptidase 6 (503 aa).

The Peptidase M14 domain maps to Y167–Y438. Residues H230, E233, and H328 each contribute to the Zn(2+) site. The active-site Proton donor/acceptor is E401. Basic and acidic residues-rich tracts occupy residues I459–P469 and K487–F503. Residues I459–F503 are disordered.

Belongs to the peptidase M14 family. As to quaternary structure, interacts with MYLK. The cofactor is Zn(2+).

It is found in the cytoplasm. The protein resides in the cytosol. Its subcellular location is the cytoskeleton. It localises to the microtubule organizing center. The protein localises to the centrosome. It is found in the centriole. The protein resides in the golgi apparatus. Its subcellular location is the cilium basal body. The catalysed reaction is (L-glutamyl)(n+1)-gamma-L-glutamyl-L-glutamyl-[protein] + H2O = (L-glutamyl)(n)-gamma-L-glutamyl-L-glutamyl-[protein] + L-glutamate. The enzyme catalyses C-terminal L-alpha-aminoacyl-L-glutamyl-L-glutamyl-[tubulin] + H2O = C-terminal L-alpha-aminoacyl-L-glutamyl-[tubulin] + L-glutamate. Functionally, metallocarboxypeptidase that mediates protein deglutamylation of tubulin and non-tubulin target proteins. Catalyzes the removal of polyglutamate side chains present on the gamma-carboxyl group of glutamate residues within the C-terminal tail of tubulin protein. Specifically cleaves tubulin long-side-chains, while it is not able to remove the branching point glutamate. Also catalyzes the removal of polyglutamate residues from the carboxy-terminus of non-tubulin proteins such as MYLK. Mediates the deglutamylation of nucleotidyltransferase CGAS, leading to CGAS antiviral defense response activation. Involved in KLF4 deglutamylation which promotes KLF4 proteasome-mediated degradation, thereby negatively regulating cell pluripotency maintenance and embryogenesis. The chain is Cytosolic carboxypeptidase 6 from Homo sapiens (Human).